A 167-amino-acid polypeptide reads, in one-letter code: Male-specific protein scotti (167 aa).

N30, N124, and N148 each carry an N-linked (GlcNAc...) asparagine glycan.

This sequence belongs to the male-specific scotti family.

Functionally, post-meiotically transcribed gene that has a role in late spermiogenesis; required for actin cone progression during spermatid individualization. This is Male-specific protein scotti from Drosophila ananassae (Fruit fly).